The sequence spans 336 residues: GTPase Obg (336 aa).

The Obg domain maps to 1 to 159 (MKFIDEATII…RRLQLELILL (159 aa)). The 174-residue stretch at 160–333 (ADVGLLGLPN…LCRDIMLFIN (174 aa)) folds into the OBG-type G domain. GTP is bound by residues 166-173 (GLPNVGKS), 191-195 (FTTLV), 213-216 (DIPG), 283-286 (NKLD), and 314-316 (SAM). Mg(2+)-binding residues include Ser173 and Thr193.

This sequence belongs to the TRAFAC class OBG-HflX-like GTPase superfamily. OBG GTPase family. As to quaternary structure, monomer. Mg(2+) serves as cofactor.

It localises to the cytoplasm. An essential GTPase which binds GTP, GDP and possibly (p)ppGpp with moderate affinity, with high nucleotide exchange rates and a fairly low GTP hydrolysis rate. Plays a role in control of the cell cycle, stress response, ribosome biogenesis and in those bacteria that undergo differentiation, in morphogenesis control. In Baumannia cicadellinicola subsp. Homalodisca coagulata, this protein is GTPase Obg.